A 1523-amino-acid chain; its full sequence is Slit homolog 3 protein (1523 aa).

Positions 1–33 (MAPGRTGAGAAVRARLALALALASILSGPPAAA) are cleaved as a signal peptide. In terms of domain architecture, LRRNT spans 34-61 (CPTKCTCSAASVDCHGLGLRAVPRGIPR). LRR repeat units follow at residues 62 to 83 (NAER…DFTG), 86 to 107 (NLRV…AFQD), 110 to 131 (QLER…LFQS), 134 to 155 (KLTR…AFRG), 158 to 179 (GVKN…AFRA), and 182 to 203 (DLEI…SFNH). An N-linked (GlcNAc...) asparagine glycan is attached at Asn-72. A glycan (N-linked (GlcNAc...) asparagine) is linked at Asn-192. In terms of domain architecture, LRRCT 1 spans 215 to 265 (NHLYCDCHLAWLSDWLRQRRTIGQFTLCMAPVHLRGFSVADVQKKEYVCPG). The LRRNT 2 domain maps to 271–307 (PACNANSLSCPSACSCSNNIVDCRGKGLTEIPANLPE). Cys-284 and Cys-293 are joined by a disulfide. LRR repeat units lie at residues 308–329 (GIVE…AFIQ), 332–353 (KLKR…AFQG), 356–377 (SLTS…LFDG), 380–401 (SLQL…TFQD), and 404–425 (NLNL…LFAP). Residues 437–487 (NPFVCDCHLKWLADYLQDNPIETSGARCSSPRRLANKRISQIKSKKFRCSG) form the LRRCT 2 domain. Disulfide bonds link Cys-441–Cys-464, Cys-443–Cys-485, Cys-505–Cys-511, and Cys-509–Cys-518. Residues 496 to 532 (SSECFMDLVCPEKCRCEGTIVDCSNQKLSRIPSHLPE) enclose the LRRNT 3 domain. LRR repeat units follow at residues 533–554 (YTTD…GIFK), 558–579 (NLRK…AFDG), 582–603 (GVQE…MFRG), 606–627 (GLKT…TFAG), and 630–651 (SVRL…AFTT). The N-linked (GlcNAc...) asparagine glycan is linked to Asn-563. A glycan (N-linked (GlcNAc...) asparagine) is linked at Asn-622. Residues 663 to 713 (NPFNCNCHMAWLGRWLRKRRIVSGNPRCQKPFFLKEIPIQDVAIQDFTCEG) form the LRRCT 3 domain. 2 disulfides stabilise this stretch: Cys-667–Cys-690 and Cys-669–Cys-711. One can recognise an LRRNT 4 domain in the interval 716-752 (ENSCQLSPRCPEQCTCVETVVRCSNRGLHTLPKGMPK). LRR repeat units follow at residues 753 to 774 (DVTE…LSTF), 776 to 797 (QLTL…TFSN), 800 to 821 (HLST…AFNG), and 824 to 845 (SLRV…SFND). 3 N-linked (GlcNAc...) asparagine glycosylation sites follow: Asn-784, Asn-792, and Asn-797. The 51-residue stretch at 857–907 (NPLHCDCSLRWLSEWIKAGYKEPGIARCSSPESMADRLLLTTPTHRFQCKG) folds into the LRRCT 4 domain. 6 consecutive EGF-like domains span residues 918 to 953 (NACL…KDCT), 955 to 994 (PINT…QRCE), 996 to 1032 (NPDD…ELCD), 1034 to 1072 (VIDY…KLCE), 1074 to 1110 (DNDD…LFCE), and 1119 to 1155 (QTSP…PRCE). 18 disulfide bridges follow: Cys-920–Cys-931, Cys-925–Cys-941, Cys-943–Cys-952, Cys-959–Cys-970, Cys-964–Cys-982, Cys-984–Cys-993, Cys-1000–Cys-1011, Cys-1005–Cys-1020, Cys-1022–Cys-1031, Cys-1038–Cys-1051, Cys-1045–Cys-1060, Cys-1062–Cys-1071, Cys-1078–Cys-1089, Cys-1083–Cys-1098, Cys-1100–Cys-1109, Cys-1123–Cys-1134, Cys-1128–Cys-1143, and Cys-1145–Cys-1154. Asn-928 is a glycosylation site (N-linked (GlcNAc...) asparagine). N-linked (GlcNAc...) asparagine glycosylation is present at Asn-1025. Residues 1158 to 1332 (ITVNFVGKDS…PQSLGVSPGC (175 aa)) enclose the Laminin G-like domain. Asn-1181 and Asn-1247 each carry an N-linked (GlcNAc...) asparagine glycan. 5 disulfide bridges follow: Cys-1305–Cys-1332, Cys-1355–Cys-1364, Cys-1372–Cys-1382, Cys-1377–Cys-1391, and Cys-1393–Cys-1402. 2 EGF-like domains span residues 1340 to 1365 (HGLC…PLCD) and 1368 to 1403 (AQDP…PLCD). N-linked (GlcNAc...) asparagine glycosylation occurs at Asn-1406. One can recognise an EGF-like 9 domain in the interval 1408-1444 (SANACSAFKCHHGQCHISDRGEPYCLCQPGFSGNHCE). Intrachain disulfides connect Cys-1412-Cys-1422, Cys-1417-Cys-1432, Cys-1434-Cys-1443, Cys-1449-Cys-1487, Cys-1467-Cys-1501, Cys-1478-Cys-1517, and Cys-1482-Cys-1519. One can recognise a CTCK domain in the interval 1449 to 1523 (CLGEIVREAI…HLECGCRECS (75 aa)).

Its subcellular location is the secreted. In terms of biological role, may act as molecular guidance cue in cellular migration, and function may be mediated by interaction with roundabout homolog receptors. The sequence is that of Slit homolog 3 protein (Slit3) from Rattus norvegicus (Rat).